Here is a 59-residue protein sequence, read N- to C-terminus: Flagellar basal-body rod protein FlgC (59 aa).

This sequence belongs to the flagella basal body rod proteins family. The basal body constitutes a major portion of the flagellar organelle and consists of four rings (L,P,S, and M) mounted on a central rod. The rod consists of about 26 subunits of FlgG in the distal portion, and FlgB, FlgC and FlgF are thought to build up the proximal portion of the rod with about 6 subunits each.

The protein localises to the bacterial flagellum basal body. The polypeptide is Flagellar basal-body rod protein FlgC (flgC) (Borrelia hermsii).